Consider the following 62-residue polypeptide: Photosystem II reaction center protein Z (62 aa).

A run of 2 helical transmembrane segments spans residues A8 to A28 and F41 to I61.

Belongs to the PsbZ family. In terms of assembly, PSII is composed of 1 copy each of membrane proteins PsbA, PsbB, PsbC, PsbD, PsbE, PsbF, PsbH, PsbI, PsbJ, PsbK, PsbL, PsbM, PsbT, PsbY, PsbZ, Psb30/Ycf12, at least 3 peripheral proteins of the oxygen-evolving complex and a large number of cofactors. It forms dimeric complexes.

It localises to the plastid. The protein resides in the chloroplast thylakoid membrane. Functionally, may control the interaction of photosystem II (PSII) cores with the light-harvesting antenna, regulates electron flow through the 2 photosystem reaction centers. PSII is a light-driven water plastoquinone oxidoreductase, using light energy to abstract electrons from H(2)O, generating a proton gradient subsequently used for ATP formation. This Morus indica (Mulberry) protein is Photosystem II reaction center protein Z.